The chain runs to 33 residues: Brevinin-2PTe (33 aa).

C27 and C33 form a disulfide bridge.

As to expression, expressed by the skin glands.

Its subcellular location is the secreted. Has antibacterial activity against the Gram-positive bacterium S.aureus ATCC 25923 (MIC=36 uM) and the Gram-negative bacterium E.coli ATCC 25726 (MIC=18 uM). The sequence is that of Brevinin-2PTe from Pulchrana picturata (Malaysian fire frog).